Consider the following 158-residue polypeptide: Peptide deformylase (158 aa).

Fe cation is bound by residues cysteine 88 and histidine 130. Glutamate 131 is a catalytic residue. Position 134 (histidine 134) interacts with Fe cation.

Belongs to the polypeptide deformylase family. It depends on Fe(2+) as a cofactor.

The catalysed reaction is N-terminal N-formyl-L-methionyl-[peptide] + H2O = N-terminal L-methionyl-[peptide] + formate. Functionally, removes the formyl group from the N-terminal Met of newly synthesized proteins. Requires at least a dipeptide for an efficient rate of reaction. N-terminal L-methionine is a prerequisite for activity but the enzyme has broad specificity at other positions. The polypeptide is Peptide deformylase (Agathobacter rectalis (strain ATCC 33656 / DSM 3377 / JCM 17463 / KCTC 5835 / VPI 0990) (Eubacterium rectale)).